A 225-amino-acid chain; its full sequence is NAD(P)H-quinone oxidoreductase subunit K, chloroplastic (225 aa).

4 residues coordinate [4Fe-4S] cluster: Cys43, Cys44, Cys108, and Cys139.

The protein belongs to the complex I 20 kDa subunit family. NDH is composed of at least 16 different subunits, 5 of which are encoded in the nucleus. The cofactor is [4Fe-4S] cluster.

Its subcellular location is the plastid. The protein resides in the chloroplast thylakoid membrane. The enzyme catalyses a plastoquinone + NADH + (n+1) H(+)(in) = a plastoquinol + NAD(+) + n H(+)(out). It carries out the reaction a plastoquinone + NADPH + (n+1) H(+)(in) = a plastoquinol + NADP(+) + n H(+)(out). In terms of biological role, NDH shuttles electrons from NAD(P)H:plastoquinone, via FMN and iron-sulfur (Fe-S) centers, to quinones in the photosynthetic chain and possibly in a chloroplast respiratory chain. The immediate electron acceptor for the enzyme in this species is believed to be plastoquinone. Couples the redox reaction to proton translocation, and thus conserves the redox energy in a proton gradient. The chain is NAD(P)H-quinone oxidoreductase subunit K, chloroplastic from Hordeum vulgare (Barley).